We begin with the raw amino-acid sequence, 226 residues long: Uracil-DNA glycosylase (226 aa).

Catalysis depends on Asp-64, which acts as the Proton acceptor.

Belongs to the uracil-DNA glycosylase (UDG) superfamily. UNG family.

It is found in the cytoplasm. The enzyme catalyses Hydrolyzes single-stranded DNA or mismatched double-stranded DNA and polynucleotides, releasing free uracil.. Functionally, excises uracil residues from the DNA which can arise as a result of misincorporation of dUMP residues by DNA polymerase or due to deamination of cytosine. This Fusobacterium nucleatum subsp. nucleatum (strain ATCC 25586 / DSM 15643 / BCRC 10681 / CIP 101130 / JCM 8532 / KCTC 2640 / LMG 13131 / VPI 4355) protein is Uracil-DNA glycosylase.